The primary structure comprises 75 residues: MCDGDCRPLGFLLGLPFAFLSLLLSIIGVIIWIVGLLLSCICPCCLCVTVLVEIAIGLIKAPIHVMEWFMSKIPC.

The N-terminal stretch at 1–29 (MCDGDCRPLGFLLGLPFAFLSLLLSIIGV) is a signal peptide.

As to expression, expressed in shoot apical meristems (SAM); mostly specific to the L1 layer in the center of the meristem but also detected in the L2 layer in organ primordia. Also observed in the vasculature of seedling roots.

It localises to the secreted. With respect to regulation, counteracted by the antibiotic cefotaxime during responses to light stress. Its function is as follows. Signaling peptide involved in the regulation of lateral organs separation, including fruits and leaves. Involved in the perception of and response to light stress via the control of sinapoyl-malate accumulation, a UV-B protecting compound. The sequence is that of Signaling peptide TAXIMIN 1 from Arabidopsis thaliana (Mouse-ear cress).